The primary structure comprises 70 residues: Large ribosomal subunit protein bL31 (70 aa).

Zn(2+) is bound by residues Cys-16, Cys-18, Cys-37, and Cys-40.

This sequence belongs to the bacterial ribosomal protein bL31 family. Type A subfamily. As to quaternary structure, part of the 50S ribosomal subunit. The cofactor is Zn(2+).

Binds the 23S rRNA. This is Large ribosomal subunit protein bL31 from Haemophilus influenzae (strain 86-028NP).